The following is a 400-amino-acid chain: Phosphoglycerate kinase (400 aa).

Substrate-binding positions include 21–23, arginine 36, 59–62, arginine 119, and arginine 160; these read DFN and HLGR. ATP is bound by residues lysine 211, glutamate 329, and 356–359; that span reads GGDS.

This sequence belongs to the phosphoglycerate kinase family. Monomer.

Its subcellular location is the cytoplasm. The catalysed reaction is (2R)-3-phosphoglycerate + ATP = (2R)-3-phospho-glyceroyl phosphate + ADP. It functions in the pathway carbohydrate degradation; glycolysis; pyruvate from D-glyceraldehyde 3-phosphate: step 2/5. This chain is Phosphoglycerate kinase, found in Lactiplantibacillus plantarum (strain ATCC BAA-793 / NCIMB 8826 / WCFS1) (Lactobacillus plantarum).